The chain runs to 293 residues: Small ribosomal subunit protein uS2m (293 aa).

A compositionally biased stretch (low complexity) spans 21–38 (GRAAQRGRTLGSAAAAAA). Disordered regions lie at residues 21 to 49 (GRAA…DRSA) and 263 to 293 (QGAP…GHSP). Over residues 39 to 49 (REPERDSDRSA) the composition is skewed to basic and acidic residues. A compositionally biased stretch (pro residues) spans 267-279 (GPHPANPAAPGAP).

Belongs to the universal ribosomal protein uS2 family. In terms of assembly, component of the mitochondrial ribosome small subunit (28S) which comprises a 12S rRNA and about 30 distinct proteins.

Its subcellular location is the mitochondrion. Required for mitoribosome formation and stability, and mitochondrial translation. The protein is Small ribosomal subunit protein uS2m (MRPS2) of Bos taurus (Bovine).